The primary structure comprises 149 residues: Large ribosomal subunit protein bL9 (149 aa).

It belongs to the bacterial ribosomal protein bL9 family.

Functionally, binds to the 23S rRNA. The polypeptide is Large ribosomal subunit protein bL9 (Helicobacter pylori (strain ATCC 700392 / 26695) (Campylobacter pylori)).